The chain runs to 1328 residues: 5'-3' exoribonuclease 1 (1328 aa).

Positions 1211-1328 (AGKNRKTNVS…VQPMGKLQIN (118 aa)) are disordered. The segment covering 1217 to 1231 (TNVSANNVSQGTDSR) has biased composition (polar residues). Residues 1275 to 1286 (HKSKSKFSKGNH) are compositionally biased toward basic residues.

The protein belongs to the 5'-3' exonuclease family. Monomer. Mg(2+) serves as cofactor.

It localises to the cytoplasm. The protein resides in the perinuclear region. It is found in the P-body. With respect to regulation, strand exchange activity is enhanced by fatty acid synthase (stimulatory factor P190/210). Functionally, multifunctional protein that exhibits several independent functions at different levels of the cellular processes. 5'-3' exonuclease component of the nonsense-mediated mRNA decay (NMD) which is a highly conserved mRNA degradation pathway, an RNA surveillance system whose role is to identify and rid cells of mRNA with premature termination codons and thus prevents accumulation of potentially harmful truncated proteins. Involved in the degradation of several hypomodified mature tRNA species and participates in the 5'-processing or the degradation of the snoRNA precursors and rRNA processing. The protein is 5'-3' exoribonuclease 1 (exo2) of Schizosaccharomyces pombe (strain 972 / ATCC 24843) (Fission yeast).